We begin with the raw amino-acid sequence, 442 residues long: D-serine dehydratase (442 aa).

An N6-(pyridoxal phosphate)lysine modification is found at lysine 118.

Belongs to the serine/threonine dehydratase family. DsdA subfamily. In terms of assembly, monomer. Requires pyridoxal 5'-phosphate as cofactor.

It catalyses the reaction D-serine = pyruvate + NH4(+). The sequence is that of D-serine dehydratase from Escherichia coli (strain 55989 / EAEC).